A 766-amino-acid polypeptide reads, in one-letter code: 1,4-alpha-glucan branching enzyme GlgB (766 aa).

The active-site Nucleophile is the Asp-431. Catalysis depends on Glu-484, which acts as the Proton donor.

This sequence belongs to the glycosyl hydrolase 13 family. GlgB subfamily. Monomer.

It catalyses the reaction Transfers a segment of a (1-&gt;4)-alpha-D-glucan chain to a primary hydroxy group in a similar glucan chain.. It participates in glycan biosynthesis; glycogen biosynthesis. Catalyzes the formation of the alpha-1,6-glucosidic linkages in glycogen by scission of a 1,4-alpha-linked oligosaccharide from growing alpha-1,4-glucan chains and the subsequent attachment of the oligosaccharide to the alpha-1,6 position. The polypeptide is 1,4-alpha-glucan branching enzyme GlgB (Thermosynechococcus vestitus (strain NIES-2133 / IAM M-273 / BP-1)).